A 208-amino-acid polypeptide reads, in one-letter code: Large ribosomal subunit protein uL4 (208 aa).

The disordered stretch occupies residues 44 to 76 (RRQGTQSTKTKSEVRGGGRKPWRQKGTGRARHG). Residues 60–76 (GGRKPWRQKGTGRARHG) are compositionally biased toward basic residues.

Belongs to the universal ribosomal protein uL4 family. As to quaternary structure, part of the 50S ribosomal subunit.

One of the primary rRNA binding proteins, this protein initially binds near the 5'-end of the 23S rRNA. It is important during the early stages of 50S assembly. It makes multiple contacts with different domains of the 23S rRNA in the assembled 50S subunit and ribosome. In terms of biological role, forms part of the polypeptide exit tunnel. The protein is Large ribosomal subunit protein uL4 of Acetivibrio thermocellus (strain ATCC 27405 / DSM 1237 / JCM 9322 / NBRC 103400 / NCIMB 10682 / NRRL B-4536 / VPI 7372) (Clostridium thermocellum).